We begin with the raw amino-acid sequence, 205 residues long: Beta-crystallin B2 (205 aa).

Residue Ala2 is modified to N-acetylalanine. An N-terminal arm region spans residues 2–16 (ASDHQTQAGKPQPLN). 2 consecutive Beta/gamma crystallin 'Greek key' domains span residues 17–56 (PKII…LVQA) and 57–101 (GPWV…RPIK). A connecting peptide region spans residues 102–106 (VDSQE). Beta/gamma crystallin 'Greek key' domains lie at 107-148 (HKII…RVQS) and 149-191 (GTWV…RRIR). Residues 193-205 (MQWHQRGAFHPSS) form a C-terminal arm region.

Belongs to the beta/gamma-crystallin family. Homo/heterodimer, or complexes of higher-order. The structure of beta-crystallin oligomers seems to be stabilized through interactions between the N-terminal arms.

Crystallins are the dominant structural components of the vertebrate eye lens. The protein is Beta-crystallin B2 (CRYBB2) of Mesocricetus auratus (Golden hamster).